The sequence spans 174 residues: Crossover junction endodeoxyribonuclease RuvC (174 aa).

Catalysis depends on residues aspartate 8, glutamate 68, and aspartate 140. Mg(2+) contacts are provided by aspartate 8, glutamate 68, and aspartate 140.

It belongs to the RuvC family. Homodimer which binds Holliday junction (HJ) DNA. The HJ becomes 2-fold symmetrical on binding to RuvC with unstacked arms; it has a different conformation from HJ DNA in complex with RuvA. In the full resolvosome a probable DNA-RuvA(4)-RuvB(12)-RuvC(2) complex forms which resolves the HJ. Mg(2+) serves as cofactor.

It localises to the cytoplasm. It catalyses the reaction Endonucleolytic cleavage at a junction such as a reciprocal single-stranded crossover between two homologous DNA duplexes (Holliday junction).. Its function is as follows. The RuvA-RuvB-RuvC complex processes Holliday junction (HJ) DNA during genetic recombination and DNA repair. Endonuclease that resolves HJ intermediates. Cleaves cruciform DNA by making single-stranded nicks across the HJ at symmetrical positions within the homologous arms, yielding a 5'-phosphate and a 3'-hydroxyl group; requires a central core of homology in the junction. The consensus cleavage sequence is 5'-(A/T)TT(C/G)-3'. Cleavage occurs on the 3'-side of the TT dinucleotide at the point of strand exchange. HJ branch migration catalyzed by RuvA-RuvB allows RuvC to scan DNA until it finds its consensus sequence, where it cleaves and resolves the cruciform DNA. In Legionella pneumophila subsp. pneumophila (strain Philadelphia 1 / ATCC 33152 / DSM 7513), this protein is Crossover junction endodeoxyribonuclease RuvC.